Reading from the N-terminus, the 646-residue chain is Rho guanine nucleotide exchange factor 7 (646 aa).

The region spanning 6–65 is the SH3 domain; the sequence is NSQLVVRAKFNFQQTNEDELSFSKGDVIHVTRVEEGGWWEGTHNGRTGWFPSNYVREIKP. 3 positions are modified to phosphoserine: Ser7, Ser71, and Ser79. Residues 93 to 273 enclose the DH domain; that stretch reads YYNVVLQNIL…KNLSAQCQEV (181 aa). The PH domain occupies 295 to 400; that stretch reads DIKTLGSVTY…WVEHLQRQTK (106 aa). Ser340 bears the Phosphoserine mark. Disordered stretches follow at residues 402–464 and 500–520; these read TSVS…GPLE and KTMKKLLPKRKPERKPSDEEF. Residues 415-428 show a composition bias toward polar residues; it reads PSHTLPSHPLTPSS. A compositionally biased stretch (basic residues) spans 500–512; the sequence is KTMKKLLPKRKPE. Phosphoserine occurs at positions 516 and 560.

In terms of assembly, interacts with SCRIB; interaction is direct and may play a role in regulation of apoptosis. Interacts with PAK kinases through the SH3 domain. Interacts with GIT1 and probably TGFB1I1. Interacts with ITCH and PARVB. Interacts with FRMPD4 (via N-terminus). Interacts with CaMK1. Interacts with PTK2/FAK1 and RAC1. Interacts with BIN2. Interacts with YWHAZ. Interacts (via PH domain) with NOX1 (via FAD-binding FR-type domain). Post-translationally, phosphorylated on Ser-516 by CaMK1; enhancement of GEF activity and downstream activation of RAC1. Phosphorylated by PTK2/FAK1; this promotes interaction with RAC1.

Its subcellular location is the cell junction. It is found in the focal adhesion. It localises to the cell projection. The protein resides in the ruffle. The protein localises to the cytoplasm. Its subcellular location is the cell cortex. It is found in the lamellipodium. Its function is as follows. Acts as a RAC1 guanine nucleotide exchange factor (GEF) and can induce membrane ruffling. Functions in cell migration, attachment and cell spreading. Promotes targeting of RAC1 to focal adhesions. May function as a positive regulator of apoptosis. Downstream of NMDA receptors and CaMKK-CaMK1 signaling cascade, promotes the formation of spines and synapses in hippocampal neurons. The protein is Rho guanine nucleotide exchange factor 7 (Arhgef7) of Rattus norvegicus (Rat).